Reading from the N-terminus, the 455-residue chain is Oxidative stress induced growth inhibitor homolog osgn-1 (455 aa).

The protein belongs to the OKL38 family. Requires NADPH as cofactor.

Its subcellular location is the midbody. Its function is as follows. Monooxygenase catalytic activity. Involved in regulation of cytokinesis; promotes rho-1/RhoA activity, probably acting locally at the midbody in late cytokinesis. Monooxygenase activity is required to stabilize structures between primordial germ cells (PGCs), termed intercellular bridges. Dispensable for fertility. This chain is Oxidative stress induced growth inhibitor homolog osgn-1, found in Caenorhabditis elegans.